The primary structure comprises 548 residues: Luciferin 4-monooxygenase (548 aa).

The short motif at 546 to 548 is the Microbody targeting signal element; the sequence is AKM.

This sequence belongs to the ATP-dependent AMP-binding enzyme family. Mg(2+) serves as cofactor.

The protein resides in the peroxisome. It carries out the reaction firefly D-luciferin + ATP + O2 = firefly oxyluciferin + hnu + AMP + CO2 + diphosphate. Produces green light with a wavelength of 544 nm. In Nipponoluciola cruciata (Genji firefly), this protein is Luciferin 4-monooxygenase.